The primary structure comprises 486 residues: Stretch-activated cation channel yam8 (486 aa).

The first 24 residues, 1-24, serve as a signal peptide directing secretion; the sequence is MFFFSTHLILKILFFWSITRNIFG. Over 25–464 the chain is Extracellular; that stretch reads ATYTSLLLNN…PGVEFYESGS (440 aa). Residues Asn33, Asn49, Asn59, Asn82, and Asn93 are each glycosylated (N-linked (GlcNAc...) asparagine). Residues 465 to 485 traverse the membrane as a helical segment; it reads ALLNISWRTFFISLIFWILFV. Position 486 (Glu486) is a topological domain, cytoplasmic.

It localises to the cell membrane. In terms of biological role, calcium-permeable, cation-selective stretch-activated channel (SAC) that functions together with CCH1 to mediate calcium entry into cells. Required during mating. This Schizosaccharomyces pombe (strain 972 / ATCC 24843) (Fission yeast) protein is Stretch-activated cation channel yam8.